We begin with the raw amino-acid sequence, 364 residues long: Dihydroorotate dehydrogenase (quinone) (364 aa).

FMN contacts are provided by residues 61–65 and Thr-85; that span reads AGYDK. Lys-65 serves as a coordination point for substrate. Residue 110–114 participates in substrate binding; the sequence is NRLGF. Positions 139 and 170 each coordinate FMN. Residue Asn-170 participates in substrate binding. The active-site Nucleophile is the Ser-173. A substrate-binding site is contributed by Asn-175. Lys-215 and Ser-243 together coordinate FMN. 244-245 provides a ligand contact to substrate; sequence NT. Residues Gly-266, Gly-295, and 316–317 each bind FMN; that span reads YT.

The protein belongs to the dihydroorotate dehydrogenase family. Type 2 subfamily. Monomer. FMN serves as cofactor.

It is found in the cell membrane. It carries out the reaction (S)-dihydroorotate + a quinone = orotate + a quinol. It participates in pyrimidine metabolism; UMP biosynthesis via de novo pathway; orotate from (S)-dihydroorotate (quinone route): step 1/1. In terms of biological role, catalyzes the conversion of dihydroorotate to orotate with quinone as electron acceptor. The polypeptide is Dihydroorotate dehydrogenase (quinone) (Brucella anthropi (strain ATCC 49188 / DSM 6882 / CCUG 24695 / JCM 21032 / LMG 3331 / NBRC 15819 / NCTC 12168 / Alc 37) (Ochrobactrum anthropi)).